Consider the following 210-residue polypeptide: T-cell surface glycoprotein CD8 beta-2 chain (210 aa).

An N-terminal signal peptide occupies residues 1-18 (MRPRLWLLLAAQLTVLHG). The 114-residue stretch at 19–132 (NSVLQQTPAY…ELTFGKGTQL (114 aa)) folds into the Ig-like V-type domain. Topologically, residues 19–170 (NSVLQQTPAY…ETQKGPLCSP (152 aa)) are extracellular. C41 and C116 are oxidised to a cystine. N102 carries an N-linked (GlcNAc...) asparagine glycan. A helical membrane pass occupies residues 171 to 191 (VTLGLLVAGVLVLLVSLGVAM). The Cytoplasmic segment spans residues 192-210 (HLCCRRRRARLRFMKQFYK).

As to quaternary structure, in general heterodimer of an alpha and a beta chain linked by two disulfide bonds.

It localises to the cell membrane. Its function is as follows. Identifies cytotoxic/suppressor T-cells that interact with MHC class I bearing targets. CD8 is thought to play a role in the process of T-cell mediated killing. This is T-cell surface glycoprotein CD8 beta-2 chain from Homo sapiens (Human).